A 392-amino-acid chain; its full sequence is ER-bound oxygenase mpaB (392 aa).

At 1–21 the chain is on the lumenal side; sequence MSLPLPPALSELARALPYSRT. A helical membrane pass occupies residues 22–41; the sequence is QWLPIFVGFLIGYPILIRAL. Topologically, residues 42-392 are cytoplasmic; that stretch reads RYKRHGEMKK…WSKYHATTND (351 aa). The tract at residues 352 to 376 is disordered; the sequence is DLGQKKGPQGDPGNDEGIKDLKDGE. Residues 367–376 are compositionally biased toward basic and acidic residues; the sequence is EGIKDLKDGE.

Belongs to the mpaB oxygenase family.

It localises to the endoplasmic reticulum membrane. The enzyme catalyses 4-farnesyl-3,5-dihydroxy-6-methylphthalide + AH2 + 2 O2 = (4E,8E)-10-(4,6-dihydroxy-7-methyl-3-oxo-1,3-dihydro-2-benzofuran-5-yl)-4,8-dimethyldeca-4,8-dienoate + acetone + A + H2O + H(+). Its pathway is secondary metabolite biosynthesis; terpenoid biosynthesis. Functionally, ER-bound oxygenase; part of the gene cluster that mediates the biosynthesis of mycophenolic acid (MPA), the first isolated antibiotic natural product in the world obtained from a culture of Penicillium brevicompactum in 1893. MpaB catalyzes the oxidative cleavage the C19-C20 double bond in farnesyl-DHMP (FDHMP) to yield FDHMP-3C via a mycophenolic aldehyde intermediate. The first step of the pathway is the synthesis of 5-methylorsellinic acid (5MOA) by the cytosolic polyketide synthase mpaC. 5MOA is then converted to the phthalide compound 5,7-dihydroxy-4,6-dimethylphthalide (DHMP) by the endoplasmic reticulum-bound cytochrome P450 monooxygenase mpaDE. MpaDE first catalyzes hydroxylation of 5-MOA to 4,6-dihydroxy-2-(hydroxymethyl)-3-methylbenzoic acid (DHMB). MpaDE then acts as a lactone synthase that catalyzes the ring closure to convert DHMB into DHMP. The next step is the prenylation of DHMP by the Golgi apparatus-associated prenyltransferase mpaA to yield farnesyl-DHMP (FDHMP). The ER-bound oxygenase mpaB then mediates the oxidative cleavage the C19-C20 double bond in FDHMP to yield FDHMP-3C via a mycophenolic aldehyde intermediate. The O-methyltransferase mpaG catalyzes the methylation of FDHMP-3C to yield MFDHMP-3C. After the cytosolic methylation of FDHMP-3C, MFDHMP-3C enters into peroxisomes probably via free diffusion due to its low molecular weight. Upon a peroxisomal CoA ligation reaction, catalyzed by a beta-oxidation component enzyme acyl-CoA ligase ACL891, MFDHMP-3C-CoA would then be restricted to peroxisomes for the following beta-oxidation pathway steps. The peroxisomal beta-oxidation machinery than converts MFDHMP-3C-CoA into MPA_CoA, via a beta-oxidation chain-shortening process. Finally mpaH acts as a peroxisomal acyl-CoA hydrolase with high substrate specificity toward MPA-CoA to release the final product MPA. The protein is ER-bound oxygenase mpaB of Penicillium brevicompactum.